Consider the following 207-residue polypeptide: Uridine kinase (207 aa).

13-20 (GASGSGKT) contributes to the ATP binding site.

The protein belongs to the uridine kinase family.

The protein resides in the cytoplasm. The enzyme catalyses uridine + ATP = UMP + ADP + H(+). It catalyses the reaction cytidine + ATP = CMP + ADP + H(+). Its pathway is pyrimidine metabolism; CTP biosynthesis via salvage pathway; CTP from cytidine: step 1/3. It functions in the pathway pyrimidine metabolism; UMP biosynthesis via salvage pathway; UMP from uridine: step 1/1. This Ureaplasma parvum serovar 3 (strain ATCC 27815 / 27 / NCTC 11736) protein is Uridine kinase.